A 622-amino-acid chain; its full sequence is Auxin response factor 11 (622 aa).

The segment at residues 145-247 (FVKILTASDT…DLRVGVRRLA (103 aa)) is a DNA-binding region (TF-B3). 2 disordered regions span residues 358 to 398 (SIQR…ISEI) and 483 to 513 (SNIS…TRSR). Polar residues-rich tracts occupy residues 376–387 (SALTPTPTQQQS) and 483–511 (SNIS…TSTR). The PB1 domain occupies 511-594 (RSRIKVQMQG…KKLFIYPSDE (84 aa)).

Belongs to the ARF family. Homodimers and heterodimers.

It localises to the nucleus. Auxin response factors (ARFs) are transcriptional factors that bind specifically to the DNA sequence 5'-TGTCTC-3' found in the auxin-responsive promoter elements (AuxREs). Could act as transcriptional activator or repressor. Formation of heterodimers with Aux/IAA proteins may alter their ability to modulate early auxin response genes expression. This Arabidopsis thaliana (Mouse-ear cress) protein is Auxin response factor 11 (ARF11).